A 452-amino-acid chain; its full sequence is Phosphoglucosamine mutase (452 aa).

The active-site Phosphoserine intermediate is S103. The Mg(2+) site is built by S103, D244, D246, and D248. At S103 the chain carries Phosphoserine.

It belongs to the phosphohexose mutase family. It depends on Mg(2+) as a cofactor. In terms of processing, activated by phosphorylation.

The enzyme catalyses alpha-D-glucosamine 1-phosphate = D-glucosamine 6-phosphate. Its function is as follows. Catalyzes the conversion of glucosamine-6-phosphate to glucosamine-1-phosphate. This is Phosphoglucosamine mutase from Fusobacterium nucleatum subsp. nucleatum (strain ATCC 25586 / DSM 15643 / BCRC 10681 / CIP 101130 / JCM 8532 / KCTC 2640 / LMG 13131 / VPI 4355).